Here is a 122-residue protein sequence, read N- to C-terminus: Large ribosomal subunit protein uL14 (122 aa).

This sequence belongs to the universal ribosomal protein uL14 family. Part of the 50S ribosomal subunit. Forms a cluster with proteins L3 and L19. In the 70S ribosome, L14 and L19 interact and together make contacts with the 16S rRNA in bridges B5 and B8.

Binds to 23S rRNA. Forms part of two intersubunit bridges in the 70S ribosome. The polypeptide is Large ribosomal subunit protein uL14 (Shewanella halifaxensis (strain HAW-EB4)).